The following is a 219-amino-acid chain: Intraflagellar transport protein 22 (219 aa).

Residues 12-19 (GPSKSGKS) and 72-79 (WDVGGSSK) each bind GTP.

It belongs to the small GTPase superfamily. Rab family.

The protein localises to the cytoplasm. It is found in the cytoskeleton. Its subcellular location is the flagellum basal body. It localises to the cell projection. The protein resides in the cilium. The protein localises to the flagellum. Its function is as follows. Required for flagellum formation. This chain is Intraflagellar transport protein 22 (IFT22), found in Trypanosoma brucei brucei (strain 927/4 GUTat10.1).